A 93-amino-acid chain; its full sequence is YcgL domain-containing protein PSHAb0508 (93 aa).

Positions 1-85 constitute a YcgL domain; it reads MLTAVYKSKK…PQENLLSQLR (85 aa).

The polypeptide is YcgL domain-containing protein PSHAb0508 (Pseudoalteromonas translucida (strain TAC 125)).